Reading from the N-terminus, the 82-residue chain is UPF0180 protein BALH_1248 (82 aa).

Belongs to the UPF0180 family.

The sequence is that of UPF0180 protein BALH_1248 from Bacillus thuringiensis (strain Al Hakam).